The primary structure comprises 78 residues: DNA-directed RNA polymerase subunit omega (78 aa).

The protein belongs to the RNA polymerase subunit omega family. As to quaternary structure, in cyanobacteria the RNAP catalytic core is composed of 2 alpha, 1 beta, 1 beta', 1 gamma and 1 omega subunit. When a sigma factor is associated with the core the holoenzyme is formed, which can initiate transcription.

The enzyme catalyses RNA(n) + a ribonucleoside 5'-triphosphate = RNA(n+1) + diphosphate. Its function is as follows. Promotes RNA polymerase assembly. Latches the N- and C-terminal regions of the beta' subunit thereby facilitating its interaction with the beta and alpha subunits. In Nostoc punctiforme (strain ATCC 29133 / PCC 73102), this protein is DNA-directed RNA polymerase subunit omega.